The following is a 378-amino-acid chain: tRNA (guanine(26)-N(2))-dimethyltransferase (378 aa).

The region spanning 4-374 is the Trm1 methyltransferase domain; that stretch reads KEVTEGKVRI…KGYEEIIRCV (371 aa). Positions 44, 69, 87, 114, and 115 each coordinate S-adenosyl-L-methionine. Zn(2+) is bound by residues cysteine 246, cysteine 249, cysteine 263, and cysteine 266.

The protein belongs to the class I-like SAM-binding methyltransferase superfamily. Trm1 family.

It catalyses the reaction guanosine(26) in tRNA + 2 S-adenosyl-L-methionine = N(2)-dimethylguanosine(26) in tRNA + 2 S-adenosyl-L-homocysteine + 2 H(+). In terms of biological role, dimethylates a single guanine residue at position 26 of a number of tRNAs using S-adenosyl-L-methionine as donor of the methyl groups. The sequence is that of tRNA (guanine(26)-N(2))-dimethyltransferase from Saccharolobus islandicus (strain M.14.25 / Kamchatka #1) (Sulfolobus islandicus).